A 136-amino-acid chain; its full sequence is Ribosome-binding factor A (136 aa).

It belongs to the RbfA family. Monomer. Binds 30S ribosomal subunits, but not 50S ribosomal subunits or 70S ribosomes.

It localises to the cytoplasm. Functionally, one of several proteins that assist in the late maturation steps of the functional core of the 30S ribosomal subunit. Associates with free 30S ribosomal subunits (but not with 30S subunits that are part of 70S ribosomes or polysomes). Required for efficient processing of 16S rRNA. May interact with the 5'-terminal helix region of 16S rRNA. The protein is Ribosome-binding factor A of Rhodopseudomonas palustris (strain BisB5).